The sequence spans 335 residues: MTSSAIRINKKPVVLSGIQPSSGMLHLGNYLGALKSFGRMQDDYTTYFMLANLHSMTFPQNPEVLRENTIRIAAQCIAAGIDPAKSIVFLQSDVYQHNQLAWVLGNVCTFGEAARMTQFKDKSGKQGNISTGLFTYPILMASDILLYDSAFVPVGADQKQHLELTRTLARRFNAQYGQTFLVPQPFECSIRIYDLQDPAVKMSKSSATESGTIFLLDSPDKIVKKIMRSVTDSEDVIGYDRETKPGVSNLVVMYSCLTDCTIEQTVNIYSGKKYSVLKKDLSDILVEVCTTIATRTNELLDDKNYIRKILVTASEQARGVAQKTIDRVYEKLGVY.

ATP-binding positions include 19 to 21 (QPS) and 28 to 29 (GN). The 'HIGH' region motif lies at 20–29 (PSSGMLHLGN). Aspartate 143 provides a ligand contact to L-tryptophan. ATP is bound by residues 155 to 157 (GAD), isoleucine 192, and 201 to 205 (KMSKS). Residues 201–205 (KMSKS) carry the 'KMSKS' region motif.

It belongs to the class-I aminoacyl-tRNA synthetase family. Homodimer.

The protein resides in the cytoplasm. The catalysed reaction is tRNA(Trp) + L-tryptophan + ATP = L-tryptophyl-tRNA(Trp) + AMP + diphosphate + H(+). Functionally, catalyzes the attachment of tryptophan to tRNA(Trp). The protein is Tryptophan--tRNA ligase of Tropheryma whipplei (strain TW08/27) (Whipple's bacillus).